A 607-amino-acid polypeptide reads, in one-letter code: Terpenoid synthase 9 (607 aa).

Residues D356, D360, N501, and D509 each contribute to the Mg(2+) site. The DDXXD motif motif lies at 356-360 (DDTFD).

The protein belongs to the terpene synthase family. Tpsa subfamily. Requires Mg(2+) as cofactor. It depends on Mn(2+) as a cofactor. Predominantly expressed in roots but also in stems, leaves and flowers.

The protein resides in the cytoplasm. It participates in secondary metabolite biosynthesis; terpenoid biosynthesis. In terms of biological role, involved in terpene biosynthesis in roots. Possesses diterpene (C20) synthase activity in vitro. Does not seem to be involved in sesquiterpene (C15) biosynthesis. The protein is Terpenoid synthase 9 of Arabidopsis thaliana (Mouse-ear cress).